We begin with the raw amino-acid sequence, 443 residues long: MSVFALGLNHTTAPVDLRGRFAFTLEQLAPTLQGFRERLTTGQRPGTPEAAILSTCNRTELYCAAEPQLVRPALEWLAGVGGVGADTLSHHAYMLEGGEAARHAFRVASGLDSMVLGEPQILGQMKQAVREADAAGTLGSTLHQLFQRSFAVAKEVRTATEIGTHSISMAAAAVRLAAQLFEDLREIRVLFVGAGEMIELAATHFSARAPARMAVANRTLERGERLASRFGAESIRLSDLPQRLHEFDAVVSCTASSLPLIGLGAVERALKVRRHRPIFMVDLAVPRDIEPEVARLDDVYLYTVDDLSAIVQSGGEKRLAAVAQAEAIIETGVQSFVHWLGQRGTVPLIQALNAQADSWRENELVRARKLLARGESVDAVLDALSRGLTQKMLHGTLAELHASDPAQRAQLATTVSRLFLRGAIPPDAVRPSGPREDDHLDGV.

Residues 55 to 58 (TCNR), Ser113, 118 to 120 (EPQ), and Gln124 contribute to the substrate site. Residue Cys56 is the Nucleophile of the active site. 193–198 (GAGEMI) contacts NADP(+).

The protein belongs to the glutamyl-tRNA reductase family. In terms of assembly, homodimer.

The enzyme catalyses (S)-4-amino-5-oxopentanoate + tRNA(Glu) + NADP(+) = L-glutamyl-tRNA(Glu) + NADPH + H(+). The protein operates within porphyrin-containing compound metabolism; protoporphyrin-IX biosynthesis; 5-aminolevulinate from L-glutamyl-tRNA(Glu): step 1/2. Its pathway is porphyrin-containing compound metabolism; chlorophyll biosynthesis. Functionally, catalyzes the NADPH-dependent reduction of glutamyl-tRNA(Glu) to glutamate 1-semialdehyde (GSA). This Methylibium petroleiphilum (strain ATCC BAA-1232 / LMG 22953 / PM1) protein is Glutamyl-tRNA reductase.